The chain runs to 142 residues: Hemoglobin subunit alpha-A (142 aa).

The region spanning valine 2–arginine 142 is the Globin domain. An O2-binding site is contributed by histidine 59. Heme b is bound at residue histidine 88.

The protein belongs to the globin family. Heterotetramer of two alpha chains and two beta chains. As to expression, red blood cells.

Its function is as follows. Involved in oxygen transport from the lung to the various peripheral tissues. The chain is Hemoglobin subunit alpha-A (HBAA) from Anser indicus (Bar-headed goose).